The sequence spans 316 residues: Tyrosine--tRNA ligase 2 (316 aa).

Residues Tyr26, Tyr146, Gln150, Asp153, and Gln168 each contribute to the L-tyrosine site. Positions 219 to 223 match the 'KMSKS' region motif; the sequence is KMSKS. An ATP-binding site is contributed by Lys222.

It belongs to the class-I aminoacyl-tRNA synthetase family. TyrS type 4 subfamily. In terms of assembly, homodimer.

It localises to the cytoplasm. It catalyses the reaction tRNA(Tyr) + L-tyrosine + ATP = L-tyrosyl-tRNA(Tyr) + AMP + diphosphate + H(+). Functionally, catalyzes the attachment of tyrosine to tRNA(Tyr) in a two-step reaction: tyrosine is first activated by ATP to form Tyr-AMP and then transferred to the acceptor end of tRNA(Tyr). This Pyrobaculum aerophilum (strain ATCC 51768 / DSM 7523 / JCM 9630 / CIP 104966 / NBRC 100827 / IM2) protein is Tyrosine--tRNA ligase 2.